The chain runs to 166 residues: Dihydrofolate reductase (166 aa).

Residues 6-164 (KISLIVAMDK…YDYYFHIYER (159 aa)) form the DHFR domain. 10-12 (IVA) lines the substrate pocket. Residues 11 to 12 (VA) and 19 to 24 (IGKDND) contribute to the NADP(+) site. Residue aspartate 32 coordinates substrate. 48–51 (GRKN) is a binding site for NADP(+). Arginine 62 is a substrate binding site. NADP(+)-binding positions include 67 to 70 (LTRD) and 100 to 105 (FGGEQI). Position 119 (threonine 119) interacts with substrate.

It belongs to the dihydrofolate reductase family.

It catalyses the reaction (6S)-5,6,7,8-tetrahydrofolate + NADP(+) = 7,8-dihydrofolate + NADPH + H(+). The protein operates within cofactor biosynthesis; tetrahydrofolate biosynthesis; 5,6,7,8-tetrahydrofolate from 7,8-dihydrofolate: step 1/1. Key enzyme in folate metabolism. Catalyzes an essential reaction for de novo glycine and purine synthesis, and for DNA precursor synthesis. This Staphylococcus haemolyticus protein is Dihydrofolate reductase (dfrD).